The sequence spans 181 residues: MMSEAKRLVLEVSPLFGELAIEKVNNMYRLTQEDDMLYFTPSEIVRLTQIEYAYTDKIVSINDEHKIHFYSSCPGFNIKSESMCLSINNWDNFITNIKYFYDSTKRKHNLKWFKKCNAIITNSCNQNDETILNVSKCYEEGDVVSIRQIDDFRSHIITLKKEEAIALKTYLDSVIPTMISK.

This is an uncharacterized protein from Enterobacteria phage T4 (Bacteriophage T4).